Consider the following 156-residue polypeptide: Class I hydrophobin B (156 aa).

An N-terminal signal peptide occupies residues 1-18 (MQFTLSAVVLALAGFSAA). 4 disulfides stabilise this stretch: Cys-52–Cys-130, Cys-60–Cys-124, Cys-61–Cys-101, and Cys-131–Cys-149.

The protein belongs to the fungal hydrophobin family.

Its subcellular location is the secreted. The protein resides in the cell wall. Functionally, aerial growth, conidiation, and dispersal of filamentous fungi in the environment rely upon a capability of their secreting small amphipathic proteins called hydrophobins (HPBs) with low sequence identity. Class I can self-assemble into an outermost layer of rodlet bundles on aerial cell surfaces, conferring cellular hydrophobicity that supports fungal growth, development and dispersal; whereas Class II form highly ordered films at water-air interfaces through intermolecular interactions but contribute nothing to the rodlet structure. In P.expansum, hydrophobins contribute to germination, tolerance to cold stress and mycotoxins patulin and citrinin production. HfbA and HfbB are essential for fungal surface hydrophobicity. The chain is Class I hydrophobin B from Penicillium expansum (Blue mold rot fungus).